Consider the following 348-residue polypeptide: Phosphoribosylformylglycinamidine cyclo-ligase (348 aa).

The protein belongs to the AIR synthase family.

The protein localises to the cytoplasm. It carries out the reaction 2-formamido-N(1)-(5-O-phospho-beta-D-ribosyl)acetamidine + ATP = 5-amino-1-(5-phospho-beta-D-ribosyl)imidazole + ADP + phosphate + H(+). It functions in the pathway purine metabolism; IMP biosynthesis via de novo pathway; 5-amino-1-(5-phospho-D-ribosyl)imidazole from N(2)-formyl-N(1)-(5-phospho-D-ribosyl)glycinamide: step 2/2. The sequence is that of Phosphoribosylformylglycinamidine cyclo-ligase from Citrifermentans bemidjiense (strain ATCC BAA-1014 / DSM 16622 / JCM 12645 / Bem) (Geobacter bemidjiensis).